Here is a 532-residue protein sequence, read N- to C-terminus: Phosphoenolpyruvate carboxykinase (ATP) (532 aa).

Residues Arg60, Tyr194, and Lys200 each coordinate substrate. ATP is bound by residues Lys200, His219, and 237–245 (GLSGTGKTT). Residues Lys200 and His219 each coordinate Mn(2+). A Mn(2+)-binding site is contributed by Asp258. 3 residues coordinate ATP: Glu286, Arg324, and Thr449. Arg324 is a binding site for substrate.

This sequence belongs to the phosphoenolpyruvate carboxykinase (ATP) family. Mn(2+) is required as a cofactor.

The protein localises to the cytoplasm. It catalyses the reaction oxaloacetate + ATP = phosphoenolpyruvate + ADP + CO2. It functions in the pathway carbohydrate biosynthesis; gluconeogenesis. Functionally, involved in the gluconeogenesis. Catalyzes the conversion of oxaloacetate (OAA) to phosphoenolpyruvate (PEP) through direct phosphoryl transfer between the nucleoside triphosphate and OAA. The sequence is that of Phosphoenolpyruvate carboxykinase (ATP) from Paracoccus denitrificans (strain Pd 1222).